The following is a 245-amino-acid chain: Endogenous retrovirus group K member 5 Env polyprotein (245 aa).

Residues 1–245 (MVTPVTWMDN…TLEFGLEIKL (245 aa)) are truncated surface protein.

Belongs to the beta type-B retroviral envelope protein family. HERV class-II K(HML-2) env subfamily. As to expression, expressed in lung, placenta, testis, peripheral blood lymphocytes, and teratocarcinoma cell lines.

It is found in the virion. Retroviral envelope proteins mediate receptor recognition and membrane fusion during early infection. Endogenous envelope proteins may have kept, lost or modified their original function during evolution. The polypeptide is Endogenous retrovirus group K member 5 Env polyprotein (ERVK-5) (Homo sapiens (Human)).